Reading from the N-terminus, the 80-residue chain is Exodeoxyribonuclease 7 small subunit (80 aa).

Belongs to the XseB family. In terms of assembly, heterooligomer composed of large and small subunits.

The protein resides in the cytoplasm. The enzyme catalyses Exonucleolytic cleavage in either 5'- to 3'- or 3'- to 5'-direction to yield nucleoside 5'-phosphates.. Its function is as follows. Bidirectionally degrades single-stranded DNA into large acid-insoluble oligonucleotides, which are then degraded further into small acid-soluble oligonucleotides. This chain is Exodeoxyribonuclease 7 small subunit, found in Pseudomonas fluorescens (strain ATCC BAA-477 / NRRL B-23932 / Pf-5).